Consider the following 26-residue polypeptide: Alpha-amylase inhibitor 1 (26 aa).

This sequence belongs to the protease inhibitor I6 (cereal trypsin/alpha-amylase inhibitor) family.

It localises to the secreted. Alpha-amylase inhibitor. The sequence is that of Alpha-amylase inhibitor 1 from Saussurea costus (Costus).